Reading from the N-terminus, the 640-residue chain is Serine/threonine-protein phosphatase with EF-hands 1 (640 aa).

Positions 16-45 (VVRAALIIQNWYRRYRARLSARQHYALAIF) constitute an IQ domain. Positions 122 to 445 (INLLLQAFKQ…PQFFQYQVTS (324 aa)) are catalytic. Mn(2+)-binding residues include Asp173, His175, Asp202, and Asn234. His235 (proton donor) is an active-site residue. His286 and His393 together coordinate Mn(2+). EF-hand domains follow at residues 473-508 (ARKT…ILGL), 556-591 (RYRS…FNAH), and 596-631 (IDDS…VHKY). Ca(2+) contacts are provided by Asp569, Asp571, Ser573, Glu580, Asp609, Asn611, Asp613, Asn615, and Glu620.

Belongs to the PPP phosphatase family. Mn(2+) serves as cofactor. Requires Mg(2+) as cofactor.

The enzyme catalyses O-phospho-L-seryl-[protein] + H2O = L-seryl-[protein] + phosphate. It catalyses the reaction O-phospho-L-threonyl-[protein] + H2O = L-threonyl-[protein] + phosphate. Activated by calcium. Functionally, may have a role in the recovery or adaptation response of photoreceptors. May have a role in development. The polypeptide is Serine/threonine-protein phosphatase with EF-hands 1 (Ppef1) (Rattus norvegicus (Rat)).